Reading from the N-terminus, the 451-residue chain is Acetylornithine aminotransferase, mitochondrial (451 aa).

K302 is modified (N6-(pyridoxal phosphate)lysine).

Belongs to the class-III pyridoxal-phosphate-dependent aminotransferase family. Pyridoxal 5'-phosphate serves as cofactor. In terms of tissue distribution, found at highest levels in nodules, confined to the infected cells.

The protein resides in the mitochondrion. It carries out the reaction N(2)-acetyl-L-ornithine + 2-oxoglutarate = N-acetyl-L-glutamate 5-semialdehyde + L-glutamate. The protein operates within amino-acid biosynthesis; L-arginine biosynthesis; N(2)-acetyl-L-ornithine from L-glutamate: step 4/4. Functionally, involved in the biosynthesis of citrulline. This Alnus glutinosa (European alder) protein is Acetylornithine aminotransferase, mitochondrial (AG118).